Here is a 496-residue protein sequence, read N- to C-terminus: Probable cytosol aminopeptidase (496 aa).

Mn(2+) is bound by residues lysine 251 and aspartate 256. Lysine 263 is a catalytic residue. Mn(2+) contacts are provided by aspartate 274, aspartate 333, and glutamate 335. The active site involves arginine 337.

This sequence belongs to the peptidase M17 family. The cofactor is Mn(2+).

It is found in the cytoplasm. The enzyme catalyses Release of an N-terminal amino acid, Xaa-|-Yaa-, in which Xaa is preferably Leu, but may be other amino acids including Pro although not Arg or Lys, and Yaa may be Pro. Amino acid amides and methyl esters are also readily hydrolyzed, but rates on arylamides are exceedingly low.. It catalyses the reaction Release of an N-terminal amino acid, preferentially leucine, but not glutamic or aspartic acids.. Functionally, presumably involved in the processing and regular turnover of intracellular proteins. Catalyzes the removal of unsubstituted N-terminal amino acids from various peptides. In Acidovorax ebreus (strain TPSY) (Diaphorobacter sp. (strain TPSY)), this protein is Probable cytosol aminopeptidase.